Here is a 262-residue protein sequence, read N- to C-terminus: Phosphonates import ATP-binding protein PhnC 3 (262 aa).

Residues 3–245 enclose the ABC transporter domain; it reads IQLECLSVTY…ELNRIYGNAE (243 aa). Position 36–43 (36–43) interacts with ATP; it reads GASGSGKS.

It belongs to the ABC transporter superfamily. Phosphonates importer (TC 3.A.1.9.1) family. In terms of assembly, the complex is composed of two ATP-binding proteins (PhnC), two transmembrane proteins (PhnE) and a solute-binding protein (PhnD).

The protein localises to the cell inner membrane. It catalyses the reaction phosphonate(out) + ATP + H2O = phosphonate(in) + ADP + phosphate + H(+). Functionally, part of the ABC transporter complex PhnCDE involved in phosphonates import. Responsible for energy coupling to the transport system. The polypeptide is Phosphonates import ATP-binding protein PhnC 3 (Nostoc sp. (strain PCC 7120 / SAG 25.82 / UTEX 2576)).